Here is a 385-residue protein sequence, read N- to C-terminus: Tryptophan--tRNA ligase (385 aa).

A 'HIGH' region motif is present at residues 82–90 (PSGPMHIGH). The 'KMSKS' region signature appears at 253-257 (KMSAS).

This sequence belongs to the class-I aminoacyl-tRNA synthetase family.

It localises to the cytoplasm. The enzyme catalyses tRNA(Trp) + L-tryptophan + ATP = L-tryptophyl-tRNA(Trp) + AMP + diphosphate + H(+). This is Tryptophan--tRNA ligase from Pyrococcus abyssi (strain GE5 / Orsay).